Consider the following 686-residue polypeptide: Protein SDA1 homolog (686 aa).

Phosphoserine is present on residues S232, S234, and S236. Residues K254–M315 adopt a coiled-coil conformation. The segment at L484–D508 is disordered. Positions T490–D508 are enriched in acidic residues. T551 bears the Phosphothreonine mark. The tract at residues M563–E586 is disordered. Residues S584, S588, and S594 each carry the phosphoserine modification. The interval K604–N649 is disordered.

This sequence belongs to the SDA1 family.

The protein localises to the nucleus. It is found in the nucleolus. Its function is as follows. Required for 60S pre-ribosomal subunits export to the cytoplasm. The chain is Protein SDA1 homolog (Sdad1) from Rattus norvegicus (Rat).